Here is a 516-residue protein sequence, read N- to C-terminus: Calcitonin receptor (516 aa).

The N-terminal stretch at 1–24 is a signal peptide; the sequence is MRFLLLNRFTLLLLLLVSPTPVLQ. At 25 to 146 the chain is on the extracellular side; the sequence is APTNLTDSGL…FTPDKLHNAY (122 aa). 4 N-linked (GlcNAc...) asparagine glycosylation sites follow: asparagine 28, asparagine 73, asparagine 125, and asparagine 130. 3 disulfide bridges follow: cysteine 55–cysteine 81, cysteine 72–cysteine 112, and cysteine 95–cysteine 134. A helical membrane pass occupies residues 147 to 169; sequence VLYYLALVGHSMSIAALIASMGI. Over 170-181 the chain is Cytoplasmic; sequence FLFFKNLSCQRV. A helical membrane pass occupies residues 182-202; the sequence is TLHKNMFLTYILNSIIIIIHL. Topologically, residues 203-256 are extracellular; it reads VEVVPNGDLVRRDPMHIFHHNTYMWTMQWELSPPLPLSAHEGKMDPHDSEVISC. Residues cysteine 256 and cysteine 326 are joined by a disulfide bond. The chain crosses the membrane as a helical span at residues 257-279; it reads KILHFFHQYMMACNYFWMLCEGI. At 280–296 the chain is on the cytoplasmic side; it reads YLHTLIVMAVFTEDQRL. The chain crosses the membrane as a helical span at residues 297-317; the sequence is RWYYLLGWGFPIVPTIIHAIT. Over 318-333 the chain is Extracellular; it reads RAVYYNDNCWLSTETH. Residues 334–357 form a helical membrane-spanning segment; sequence LLYIIHGPVMAALVVNFFFLLNIV. Residues 358 to 377 are Cytoplasmic-facing; that stretch reads RVLVTKMRQTHEAEAYMYLK. The helical transmembrane segment at 378-396 threads the bilayer; that stretch reads AVKATMVLVPLLGIQFVVF. Residues 397 to 404 lie on the Extracellular side of the membrane; sequence PWRPSNKV. A helical membrane pass occupies residues 405-431; the sequence is LGKIYDYLMHSLIHFQGFFVATIYCFC. Topologically, residues 432–516 are cytoplasmic; it reads NHEVQVTLKR…MNVIQQDSSA (85 aa). Residues 489 to 516 form a disordered region; it reads RNPPVSNNEGEEGTEMIPMNVIQQDSSA.

Belongs to the G-protein coupled receptor 2 family. As to quaternary structure, heterodimer of CALCR and RAMP1, RAMP2 or RAMP3; the receptor complexes function as AMYR1, AMYR2 and AMYR3 receptors, respectively, and respond to amylin/IAPP, calcitonin/CT and CGRP1 ligands. Interacts with GPRASP2.

The protein localises to the cell membrane. In terms of biological role, g protein-coupled receptor activated by ligand peptides amylin (IAPP), calcitonin (CT/CALCA) and calcitonin gene-related peptide type 1 (CGRP1/CALCA). CALCR interacts with receptor-activity-modifying proteins RAMP1, 2 and 3 to form receptor complexes AMYR1, 2 and 3, respectively. IAPP, CT and CGRP1 activate CALCR and AMYRs with distinct modes of receptor activation resulting in specific phenotypes. Ligand binding causes a conformation change that triggers signaling via guanine nucleotide-binding proteins (G proteins) and modulates the activity of downstream effectors. Activates cAMP-dependent pathway. This chain is Calcitonin receptor, found in Rattus norvegicus (Rat).